Here is a 390-residue protein sequence, read N- to C-terminus: NADH-quinone oxidoreductase subunit D (390 aa).

Belongs to the complex I 49 kDa subunit family. NDH-1 is composed of 14 different subunits. Subunits NuoB, C, D, E, F, and G constitute the peripheral sector of the complex.

The protein localises to the cell membrane. It carries out the reaction a quinone + NADH + 5 H(+)(in) = a quinol + NAD(+) + 4 H(+)(out). Its function is as follows. NDH-1 shuttles electrons from NADH, via FMN and iron-sulfur (Fe-S) centers, to quinones in the respiratory chain. The immediate electron acceptor for the enzyme in this species is believed to be ubiquinone. Couples the redox reaction to proton translocation (for every two electrons transferred, four hydrogen ions are translocated across the cytoplasmic membrane), and thus conserves the redox energy in a proton gradient. This is NADH-quinone oxidoreductase subunit D from Wolbachia pipientis subsp. Culex pipiens (strain wPip).